Here is a 148-residue protein sequence, read N- to C-terminus: D-aminoacyl-tRNA deacylase (148 aa).

Residues 137-138 (GP) carry the Gly-cisPro motif, important for rejection of L-amino acids motif.

The protein belongs to the DTD family. As to quaternary structure, homodimer.

Its subcellular location is the cytoplasm. The catalysed reaction is glycyl-tRNA(Ala) + H2O = tRNA(Ala) + glycine + H(+). It carries out the reaction a D-aminoacyl-tRNA + H2O = a tRNA + a D-alpha-amino acid + H(+). An aminoacyl-tRNA editing enzyme that deacylates mischarged D-aminoacyl-tRNAs. Also deacylates mischarged glycyl-tRNA(Ala), protecting cells against glycine mischarging by AlaRS. Acts via tRNA-based rather than protein-based catalysis; rejects L-amino acids rather than detecting D-amino acids in the active site. By recycling D-aminoacyl-tRNA to D-amino acids and free tRNA molecules, this enzyme counteracts the toxicity associated with the formation of D-aminoacyl-tRNA entities in vivo and helps enforce protein L-homochirality. The polypeptide is D-aminoacyl-tRNA deacylase (Latilactobacillus sakei subsp. sakei (strain 23K) (Lactobacillus sakei subsp. sakei)).